Here is a 154-residue protein sequence, read N- to C-terminus: Iron-sulfur cluster assembly 2 homolog, mitochondrial (154 aa).

The N-terminal 8 residues, 1-8 (MAAARGLS), are a transit peptide targeting the mitochondrion. Positions 79, 144, and 146 each coordinate Fe cation.

This sequence belongs to the HesB/IscA family. As to quaternary structure, heterotetramer; forms a dimer of dimers with IBA57. Interacts with [2Fe-2S]-ISCA2 forming the heterodimer [2Fe- 2S]-ISCA2-IBA57 complex; [2Fe-2S] cluster binding is absolutely required to promote the complex formation.

It localises to the mitochondrion. Functionally, involved in the maturation of mitochondrial 4Fe-4S proteins functioning late in the iron-sulfur cluster assembly pathway. May be involved in the binding of an intermediate of Fe/S cluster assembly. The polypeptide is Iron-sulfur cluster assembly 2 homolog, mitochondrial (ISCA2) (Pongo abelii (Sumatran orangutan)).